Reading from the N-terminus, the 115-residue chain is Type 3 secretion system chaperone PscG (115 aa).

Belongs to the YscG family. Forms a stable heterotrimeric complex with PscE and PscF/SctF in the cytoplasm. Co-stabilized by PscE.

It is found in the cytoplasm. In terms of biological role, chaperone of the type III secretion system (T3SS), also called injectisome, which is used to inject bacterial effector proteins into eukaryotic host cells, facilitating the establishment and dissemination of infection. Along with PscE, prevents premature polymerization of the PscF/SctF needle protein within the cytoplasm. Required for type III secretion needle assembly. Also required for cytotoxicity by influencing PscF/SctF levels. The chain is Type 3 secretion system chaperone PscG (pscG) from Pseudomonas aeruginosa (strain ATCC 15692 / DSM 22644 / CIP 104116 / JCM 14847 / LMG 12228 / 1C / PRS 101 / PAO1).